Reading from the N-terminus, the 428-residue chain is Nematode resistance protein-like HSPRO1 (428 aa).

Interacts with SNF4.

The protein localises to the cytoplasm. Functionally, positive regulator of basal resistance. This is Nematode resistance protein-like HSPRO1 (HSPRO1) from Arabidopsis thaliana (Mouse-ear cress).